A 148-amino-acid polypeptide reads, in one-letter code: Large ribosomal subunit protein bL27m (148 aa).

A mitochondrion-targeting transit peptide spans 1–30 (MAAAALTLRTRAAVTALLSPTAPTALAVRH). A disordered region spans residues 28 to 48 (VRHASKKTGGSSKNLGGKSRG).

The protein belongs to the bacterial ribosomal protein bL27 family. In terms of assembly, component of the mitochondrial ribosome large subunit (39S) which comprises a 16S rRNA and about 50 distinct proteins.

It is found in the mitochondrion. This is Large ribosomal subunit protein bL27m (Mrpl27) from Mus musculus (Mouse).